The primary structure comprises 89 residues: Small ribosomal subunit protein uS15 (89 aa).

Residues 1-21 (MALSKEQKTETLKEFGLHETD) show a composition bias toward basic and acidic residues. The interval 1 to 22 (MALSKEQKTETLKEFGLHETDT) is disordered.

The protein belongs to the universal ribosomal protein uS15 family. Part of the 30S ribosomal subunit. Forms a bridge to the 50S subunit in the 70S ribosome, contacting the 23S rRNA.

Its function is as follows. One of the primary rRNA binding proteins, it binds directly to 16S rRNA where it helps nucleate assembly of the platform of the 30S subunit by binding and bridging several RNA helices of the 16S rRNA. In terms of biological role, forms an intersubunit bridge (bridge B4) with the 23S rRNA of the 50S subunit in the ribosome. In Corynebacterium jeikeium (strain K411), this protein is Small ribosomal subunit protein uS15.